The chain runs to 313 residues: tRNA dimethylallyltransferase (313 aa).

An ATP-binding site is contributed by 14–21 (GPTASGKT). A substrate-binding site is contributed by 16 to 21 (TASGKT). 2 interaction with substrate tRNA regions span residues 39 to 42 (DSAL) and 163 to 167 (QRIGR).

It belongs to the IPP transferase family. In terms of assembly, monomer. The cofactor is Mg(2+).

It carries out the reaction adenosine(37) in tRNA + dimethylallyl diphosphate = N(6)-dimethylallyladenosine(37) in tRNA + diphosphate. Its function is as follows. Catalyzes the transfer of a dimethylallyl group onto the adenine at position 37 in tRNAs that read codons beginning with uridine, leading to the formation of N6-(dimethylallyl)adenosine (i(6)A). The protein is tRNA dimethylallyltransferase of Thiobacillus denitrificans (strain ATCC 25259 / T1).